We begin with the raw amino-acid sequence, 906 residues long: Rho GTPase-activating protein gacJ (906 aa).

Positions 53–117 (LEGHLNPSSH…RDNSRSDNIR (65 aa)) are disordered. A compositionally biased stretch (low complexity) spans 69–79 (NNNNNNNNNNN). Over residues 92-117 (SRSDSKHHNRENSKSDRDNSRSDNIR) the composition is skewed to basic and acidic residues. The 188-residue stretch at 161 to 348 (EELQSLYPDQ…YMLEYFNDIF (188 aa)) folds into the Rho-GAP domain. 3 disordered regions span residues 368–415 (DTTS…SRSK), 452–864 (EIIP…SVLT), and 877–906 (ANQA…NINK). Over residues 381 to 404 (NGGSPRTSNTPYQQQHQLSSQSMA) the composition is skewed to polar residues. The span at 461 to 487 (TTTTTTTTTNTTTTTTTTNTTPNNTTT) shows a compositional bias: low complexity. Pro residues-rich tracts occupy residues 494-510 (PVPP…PPNP) and 547-560 (QPPP…PSPP). The segment covering 565 to 574 (KPTSKSDFIP) has biased composition (polar residues). 2 stretches are compositionally biased toward low complexity: residues 575-597 (STNN…SIPK) and 613-629 (IEEP…TTTT). Residues 637–649 (FKNNGTISSGSKS) are compositionally biased toward polar residues. Low complexity-rich tracts occupy residues 650 to 663 (NPNL…NQPL) and 683 to 694 (SKPITTTPTIKK). The segment covering 708-721 (PPSPSSSSPSPPHN) has biased composition (pro residues). Composition is skewed to low complexity over residues 754-772 (PTIP…PTTP), 785-816 (PPIN…STPK), and 844-861 (SSPT…SSPS). Positions 880–890 (AKKNPLSNSGG) are enriched in polar residues.

The protein localises to the cytoplasm. Functionally, rho GTPase-activating protein involved in the signal transduction pathway. This Dictyostelium discoideum (Social amoeba) protein is Rho GTPase-activating protein gacJ (gacJ).